Reading from the N-terminus, the 439-residue chain is Chaperone SurA (439 aa).

The signal sequence occupies residues 1-27; sequence MRRISSRLSLVLFAALSCATALFPAHA. PpiC domains are found at residues 180–281 and 293–391; these read GEEF…KLLD and LEQT…QVEA.

It is found in the periplasm. The enzyme catalyses [protein]-peptidylproline (omega=180) = [protein]-peptidylproline (omega=0). In terms of biological role, chaperone involved in the correct folding and assembly of outer membrane proteins. Recognizes specific patterns of aromatic residues and the orientation of their side chains, which are found more frequently in integral outer membrane proteins. May act in both early periplasmic and late outer membrane-associated steps of protein maturation. This is Chaperone SurA from Aromatoleum aromaticum (strain DSM 19018 / LMG 30748 / EbN1) (Azoarcus sp. (strain EbN1)).